Here is a 135-residue protein sequence, read N- to C-terminus: Small ribosomal subunit protein uS11 (135 aa).

Belongs to the universal ribosomal protein uS11 family. As to quaternary structure, part of the 30S ribosomal subunit. Interacts with proteins S7 and S18. Binds to IF-3.

In terms of biological role, located on the platform of the 30S subunit, it bridges several disparate RNA helices of the 16S rRNA. Forms part of the Shine-Dalgarno cleft in the 70S ribosome. The protein is Small ribosomal subunit protein uS11 of Polynucleobacter necessarius subsp. necessarius (strain STIR1).